Reading from the N-terminus, the 576-residue chain is uncharacterized protein (576 aa).

Composition is skewed to polar residues over residues 1–21 (MSTNPNAGIQPLTNSISQSAS) and 28–40 (HTTSHESVSTYQL). Residues 1–40 (MSTNPNAGIQPLTNSISQSASAHPELYHTTSHESVSTYQL) are disordered. Helical transmembrane passes span 149 to 169 (FASSVFSVPAEAITTIFHISL), 173 to 193 (LLTMTVFLCGYIAGPIVWAPL), 200 to 220 (KLPLLIGMFGFGIFNISVAVA), 231 to 251 (FFSGFFASAPLTVVAAAFADM), 261 to 281 (ITIFAALVFDGPLVSPIIGGF), 291 to 311 (WTEYITSFMGFFALVIVYLFC), 366 to 386 (PIVFLITLYSSFVYAILYLLL), 401 to 421 (MGVAELPYIGLLVGVFIGSAI), 446 to 466 (LPPMMIGCFMFPAGIFWLSWS), 472 to 492 (VHWIVPTLSGLATGCGILLIF), 503 to 525 (YLFRAASAVAANTIMRSAMAAGF), and 542 to 562 (GSLLGFIAVALIPMPFAFFFF).

Belongs to the major facilitator superfamily. CAR1 family.

The protein localises to the endoplasmic reticulum. It is found in the golgi apparatus. It localises to the membrane. This is an uncharacterized protein from Schizosaccharomyces pombe (strain 972 / ATCC 24843) (Fission yeast).